Consider the following 240-residue polypeptide: Uridylate kinase (240 aa).

13–16 is an ATP binding site; sequence KLSG. The interval 21–26 is involved in allosteric activation by GTP; the sequence is GEKGFG. Gly-55 contributes to the UMP binding site. Gly-56 and Arg-60 together coordinate ATP. UMP-binding positions include Asp-75 and 136–143; that span reads IGNPYFST. ATP is bound by residues Asn-164, Tyr-170, and Asp-173.

Belongs to the UMP kinase family. As to quaternary structure, homohexamer.

Its subcellular location is the cytoplasm. The enzyme catalyses UMP + ATP = UDP + ADP. The protein operates within pyrimidine metabolism; CTP biosynthesis via de novo pathway; UDP from UMP (UMPK route): step 1/1. With respect to regulation, allosterically activated by GTP. Inhibited by UTP. Catalyzes the reversible phosphorylation of UMP to UDP. This chain is Uridylate kinase, found in Staphylococcus aureus (strain USA300).